The chain runs to 248 residues: Probable transcriptional regulatory protein Mrad2831_3553 (248 aa).

This sequence belongs to the TACO1 family.

The protein resides in the cytoplasm. The polypeptide is Probable transcriptional regulatory protein Mrad2831_3553 (Methylobacterium radiotolerans (strain ATCC 27329 / DSM 1819 / JCM 2831 / NBRC 15690 / NCIMB 10815 / 0-1)).